A 236-amino-acid polypeptide reads, in one-letter code: Ribonuclease 3 (236 aa).

Positions 7-136 constitute an RNase III domain; the sequence is KSYILKKFNI…FIGALYLDQG (130 aa). Glu49 contributes to the Mg(2+) binding site. The active site involves Asp53. Mg(2+)-binding residues include Asp122 and Glu125. Residue Glu125 is part of the active site. Residues 162-232 enclose the DRBM domain; it reads DFKSRLQERL…ARAALKILED (71 aa).

The protein belongs to the ribonuclease III family. Homodimer. It depends on Mg(2+) as a cofactor.

It localises to the cytoplasm. The catalysed reaction is Endonucleolytic cleavage to 5'-phosphomonoester.. In terms of biological role, digests double-stranded RNA. Involved in the processing of primary rRNA transcript to yield the immediate precursors to the large and small rRNAs (23S and 16S). Processes some mRNAs, and tRNAs when they are encoded in the rRNA operon. Processes pre-crRNA and tracrRNA of type II CRISPR loci if present in the organism. This is Ribonuclease 3 from Leuconostoc mesenteroides subsp. mesenteroides (strain ATCC 8293 / DSM 20343 / BCRC 11652 / CCM 1803 / JCM 6124 / NCDO 523 / NBRC 100496 / NCIMB 8023 / NCTC 12954 / NRRL B-1118 / 37Y).